The chain runs to 175 residues: DM domain-containing protein mab-23 (175 aa).

Residues Cys-8–His-56 constitute a DNA-binding region (DM). Positions Asn-58–Gly-93 are disordered. Residues Glu-59–Ser-71 are compositionally biased toward polar residues. Positions Thr-81 to Thr-91 are enriched in low complexity.

In terms of tissue distribution, expressed in a limited number of non-sex-specific tissues in males, including 6-8 unidentified neurons of the head, ventral body wall muscle, and the PHCL/R neurons.

The protein resides in the nucleus. Probable transcription factor that plays a role in the development of the dopaminergic neurons of the male-specific genital sensilla (simple sense organs) known as rays, by negatively regulating the activity of the transcription factor ast-1. Involved in male mating behavior, probably as a result of a role in the differentiation of male-specific diagonal muscles. Required for development of the male proctodeum. May be dispensable in hermaphrodites. This Caenorhabditis elegans protein is DM domain-containing protein mab-23.